The primary structure comprises 372 residues: Queuine tRNA-ribosyltransferase (372 aa).

Residue aspartate 89 is the Proton acceptor of the active site. Residues 89 to 93, aspartate 161, and glycine 232 contribute to the substrate site; that span reads DSGGF. The tract at residues 262 to 268 is RNA binding; the sequence is GIGDLPS. The active-site Nucleophile is aspartate 281. Residues 286-290 form an RNA binding; important for wobble base 34 recognition region; that stretch reads TKAAR. Cysteine 319, cysteine 321, cysteine 324, and histidine 351 together coordinate Zn(2+).

Belongs to the queuine tRNA-ribosyltransferase family. In terms of assembly, homodimer. Within each dimer, one monomer is responsible for RNA recognition and catalysis, while the other monomer binds to the replacement base PreQ1. Zn(2+) serves as cofactor.

The catalysed reaction is 7-aminomethyl-7-carbaguanine + guanosine(34) in tRNA = 7-aminomethyl-7-carbaguanosine(34) in tRNA + guanine. It participates in tRNA modification; tRNA-queuosine biosynthesis. Functionally, catalyzes the base-exchange of a guanine (G) residue with the queuine precursor 7-aminomethyl-7-deazaguanine (PreQ1) at position 34 (anticodon wobble position) in tRNAs with GU(N) anticodons (tRNA-Asp, -Asn, -His and -Tyr). Catalysis occurs through a double-displacement mechanism. The nucleophile active site attacks the C1' of nucleotide 34 to detach the guanine base from the RNA, forming a covalent enzyme-RNA intermediate. The proton acceptor active site deprotonates the incoming PreQ1, allowing a nucleophilic attack on the C1' of the ribose to form the product. After dissociation, two additional enzymatic reactions on the tRNA convert PreQ1 to queuine (Q), resulting in the hypermodified nucleoside queuosine (7-(((4,5-cis-dihydroxy-2-cyclopenten-1-yl)amino)methyl)-7-deazaguanosine). The polypeptide is Queuine tRNA-ribosyltransferase (Chlamydia trachomatis serovar L2 (strain ATCC VR-902B / DSM 19102 / 434/Bu)).